Consider the following 439-residue polypeptide: ATP-dependent RNA helicase RhlB (439 aa).

Residues 9–37 carry the Q motif motif; sequence QKFADLPLHPEVKQALAENGFEFCTPIQA. One can recognise a Helicase ATP-binding domain in the interval 40 to 219; sequence LPVLLQSKDI…YDHMNDPVKV (180 aa). 53-60 is a binding site for ATP; sequence AQTGTGKT. Positions 165–168 match the DEAD box motif; it reads DEAD. In terms of domain architecture, Helicase C-terminal spans 243–390; it reads KMRLLLTLIE…VSNYDSSALL (148 aa). The disordered stretch occupies residues 398–439; it reads KIPRKHPAGTRNLRERAGAGRPQGAHRSGGRPPRHDRTRRHS. Residues 425 to 439 show a composition bias toward basic residues; sequence SGGRPPRHDRTRRHS.

Belongs to the DEAD box helicase family. RhlB subfamily. Component of the RNA degradosome, which is a multiprotein complex involved in RNA processing and mRNA degradation.

The protein localises to the cytoplasm. The catalysed reaction is ATP + H2O = ADP + phosphate + H(+). In terms of biological role, DEAD-box RNA helicase involved in RNA degradation. Has RNA-dependent ATPase activity and unwinds double-stranded RNA. This is ATP-dependent RNA helicase RhlB from Shewanella putrefaciens (strain CN-32 / ATCC BAA-453).